Consider the following 250-residue polypeptide: Phosphonates import ATP-binding protein PhnC (250 aa).

Residues 2–247 form the ABC transporter domain; sequence IVFNNVNKVW…KLDAQAMKKI (246 aa). 35 to 42 contacts ATP; the sequence is GLSGAGKT.

Belongs to the ABC transporter superfamily. Phosphonates importer (TC 3.A.1.9.1) family. As to quaternary structure, the complex is composed of two ATP-binding proteins (PhnC), two transmembrane proteins (PhnE) and a solute-binding protein (PhnD).

It localises to the cell membrane. It carries out the reaction phosphonate(out) + ATP + H2O = phosphonate(in) + ADP + phosphate + H(+). Its function is as follows. Part of the ABC transporter complex PhnCDE involved in phosphonates import. Responsible for energy coupling to the transport system. This Mycoplasma mycoides subsp. mycoides SC (strain CCUG 32753 / NCTC 10114 / PG1) protein is Phosphonates import ATP-binding protein PhnC.